The following is a 155-amino-acid chain: NADPH-dependent 7-cyano-7-deazaguanine reductase (155 aa).

The active-site Thioimide intermediate is Cys-53. Asp-60 functions as the Proton donor in the catalytic mechanism. Residues 75–77 (VES) and 94–95 (HE) contribute to the substrate site.

Belongs to the GTP cyclohydrolase I family. QueF type 1 subfamily.

The protein localises to the cytoplasm. The catalysed reaction is 7-aminomethyl-7-carbaguanine + 2 NADP(+) = 7-cyano-7-deazaguanine + 2 NADPH + 3 H(+). It functions in the pathway tRNA modification; tRNA-queuosine biosynthesis. Its function is as follows. Catalyzes the NADPH-dependent reduction of 7-cyano-7-deazaguanine (preQ0) to 7-aminomethyl-7-deazaguanine (preQ1). This is NADPH-dependent 7-cyano-7-deazaguanine reductase from Brucella abortus (strain S19).